Consider the following 294-residue polypeptide: Homeobox-leucine zipper protein ATHB-13 (294 aa).

The homeobox DNA-binding region spans 82–141 (MGEKKRRLNMEQVKTLEKNFELGNKLEPERKMQLARALGLQPRQIAIWFQNRRARWKTKQ). Residues 142–177 (LEKDYDTLKRQFDTLKAENDLLQTHNQKLQAEIMGL) form a leucine-zipper region. Residues 181–246 (EQTESINLNK…FFPPSPATAT (66 aa)) are disordered. Residues 197-210 (SNRSDNSSDNLRLD) show a composition bias toward low complexity. The segment covering 214-223 (APPSNDSTLT) has biased composition (polar residues).

This sequence belongs to the HD-ZIP homeobox family. Class I subfamily. Predominantly expressed in leaves and flowers.

Its subcellular location is the nucleus. Functionally, probable transcription factor that may act in the sucrose-signaling pathway. In Arabidopsis thaliana (Mouse-ear cress), this protein is Homeobox-leucine zipper protein ATHB-13 (ATHB-13).